Here is a 77-residue protein sequence, read N- to C-terminus: MGGLSIWHWLIVLLIVALVFGTKKLRNIGNDLGSAVKGFKDGMKESEAPADAQQLPRSGSVNVDAKDAARSSDSNKA.

Residues 1–21 traverse the membrane as a helical segment; the sequence is MGGLSIWHWLIVLLIVALVFG. The tract at residues 43 to 77 is disordered; it reads MKESEAPADAQQLPRSGSVNVDAKDAARSSDSNKA. Residues 64 to 77 are compositionally biased toward basic and acidic residues; that stretch reads DAKDAARSSDSNKA.

This sequence belongs to the TatA/E family. The Tat system comprises two distinct complexes: a TatABC complex, containing multiple copies of TatA, TatB and TatC subunits, and a separate TatA complex, containing only TatA subunits. Substrates initially bind to the TatABC complex, which probably triggers association of the separate TatA complex to form the active translocon.

Its subcellular location is the cell inner membrane. Functionally, part of the twin-arginine translocation (Tat) system that transports large folded proteins containing a characteristic twin-arginine motif in their signal peptide across membranes. TatA could form the protein-conducting channel of the Tat system. The polypeptide is Sec-independent protein translocase protein TatA (Burkholderia mallei (strain NCTC 10247)).